The following is a 328-amino-acid chain: MSVQLDPQGQLRHLVTTEGLPRELLTRILDTAESFSGVLGKSVKKVPLLRGRTIINLFFEPSTRTRTTFELAAQRLSADVLNIDVATSSTSKGESLLDMLRNLEAMQCDAFVVRHADSGAAEFIARHVAPGVAVINAGDGRHAHPTQALLDAFTIRREKGPLEPLTIAIVGDILHSRVARSQIHALLGLGAGEVRVIGPRTLLPRDIQRLGVRVYEDMDAGLDGADVLIMLRLQRERMRGALLPSESEYFSRYGLTEQRLERTHPEAIVMHPGPVNRGVELDPQVADGPRSVILRQVTNGIAVRMAVMSIVLGGHGEAPAEPIEEASS.

Positions 64 and 65 each coordinate carbamoyl phosphate. An L-aspartate-binding site is contributed by Lys92. 3 residues coordinate carbamoyl phosphate: Arg114, His144, and Gln147. Residues Arg177 and Arg232 each coordinate L-aspartate. Carbamoyl phosphate-binding residues include Gly273 and Pro274.

It belongs to the aspartate/ornithine carbamoyltransferase superfamily. ATCase family. As to quaternary structure, heterododecamer (2C3:3R2) of six catalytic PyrB chains organized as two trimers (C3), and six regulatory PyrI chains organized as three dimers (R2).

It carries out the reaction carbamoyl phosphate + L-aspartate = N-carbamoyl-L-aspartate + phosphate + H(+). It functions in the pathway pyrimidine metabolism; UMP biosynthesis via de novo pathway; (S)-dihydroorotate from bicarbonate: step 2/3. Catalyzes the condensation of carbamoyl phosphate and aspartate to form carbamoyl aspartate and inorganic phosphate, the committed step in the de novo pyrimidine nucleotide biosynthesis pathway. This is Aspartate carbamoyltransferase catalytic subunit from Halorhodospira halophila (strain DSM 244 / SL1) (Ectothiorhodospira halophila (strain DSM 244 / SL1)).